The chain runs to 498 residues: Mitogen-activated protein kinase 15 (498 aa).

In terms of domain architecture, Protein kinase spans 13–304 (YKIEEVIGKG…AEEALADPYF (292 aa)). ATP-binding positions include 19–27 (IGKGSYGVV) and Lys-42. Asp-139 serves as the catalytic Proton acceptor. A Phosphothreonine modification is found at Thr-175. The short motif at 175 to 177 (TDY) is the TXY element. Phosphotyrosine is present on Tyr-177. Disordered regions lie at residues 388–411 (STAA…SDDR) and 470–498 (STAE…GSYP). Polar residues predominate over residues 486-498 (LATNTVSPRGSYP).

Belongs to the protein kinase superfamily. CMGC Ser/Thr protein kinase family. MAP kinase subfamily. In terms of processing, dually phosphorylated on Thr-175 and Tyr-177, which activates the enzyme.

It carries out the reaction L-seryl-[protein] + ATP = O-phospho-L-seryl-[protein] + ADP + H(+). The catalysed reaction is L-threonyl-[protein] + ATP = O-phospho-L-threonyl-[protein] + ADP + H(+). Its activity is regulated as follows. Activated by threonine and tyrosine phosphorylation. The polypeptide is Mitogen-activated protein kinase 15 (MPK15) (Oryza sativa subsp. japonica (Rice)).